Reading from the N-terminus, the 152-residue chain is ARL14 effector protein-like (152 aa).

The span at 1 to 16 (MTEPSQKNNSTQQELT) shows a compositional bias: polar residues. The segment at 1-27 (MTEPSQKNNSTQQELTNHLFPEKSSQI) is disordered.

This chain is ARL14 effector protein-like (Arl14epl), found in Mus musculus (Mouse).